The following is a 361-amino-acid chain: uncharacterized protein (361 aa).

Thr-12 is modified (phosphothreonine).

It localises to the cytoplasm. It is found in the nucleus. This is an uncharacterized protein from Schizosaccharomyces pombe (strain 972 / ATCC 24843) (Fission yeast).